The following is a 74-amino-acid chain: ATP synthase subunit c (74 aa).

Transmembrane regions (helical) follow at residues 13-33 (ISVI…ASLI) and 51-71 (ILGF…AFLI).

This sequence belongs to the ATPase C chain family. In terms of assembly, F-type ATPases have 2 components, F(1) - the catalytic core - and F(0) - the membrane proton channel. F(1) has five subunits: alpha(3), beta(3), gamma(1), delta(1), epsilon(1). F(0) has three main subunits: a(1), b(2) and c(10-14). The alpha and beta chains form an alternating ring which encloses part of the gamma chain. F(1) is attached to F(0) by a central stalk formed by the gamma and epsilon chains, while a peripheral stalk is formed by the delta and b chains.

It is found in the cell inner membrane. Its function is as follows. F(1)F(0) ATP synthase produces ATP from ADP in the presence of a proton or sodium gradient. F-type ATPases consist of two structural domains, F(1) containing the extramembraneous catalytic core and F(0) containing the membrane proton channel, linked together by a central stalk and a peripheral stalk. During catalysis, ATP synthesis in the catalytic domain of F(1) is coupled via a rotary mechanism of the central stalk subunits to proton translocation. Functionally, key component of the F(0) channel; it plays a direct role in translocation across the membrane. A homomeric c-ring of between 10-14 subunits forms the central stalk rotor element with the F(1) delta and epsilon subunits. This chain is ATP synthase subunit c, found in Granulibacter bethesdensis (strain ATCC BAA-1260 / CGDNIH1).